A 208-amino-acid chain; its full sequence is Cytochrome c biogenesis ATP-binding export protein CcmA (208 aa).

The region spanning 3–206 is the ABC transporter domain; the sequence is LSGKDLTAYR…LEKFLPPQEK (204 aa). Residue 35-42 participates in ATP binding; sequence GPNGIGKS.

It belongs to the ABC transporter superfamily. CcmA exporter (TC 3.A.1.107) family. As to quaternary structure, the complex is composed of two ATP-binding proteins (CcmA) and two transmembrane proteins (CcmB).

The protein localises to the cell inner membrane. The catalysed reaction is heme b(in) + ATP + H2O = heme b(out) + ADP + phosphate + H(+). In terms of biological role, part of the ABC transporter complex CcmAB involved in the biogenesis of c-type cytochromes; once thought to export heme, this seems not to be the case, but its exact role is uncertain. Responsible for energy coupling to the transport system. The polypeptide is Cytochrome c biogenesis ATP-binding export protein CcmA (Bartonella henselae (strain ATCC 49882 / DSM 28221 / CCUG 30454 / Houston 1) (Rochalimaea henselae)).